Reading from the N-terminus, the 234-residue chain is UPF0502 protein BTH_II0990 (234 aa).

It belongs to the UPF0502 family.

The polypeptide is UPF0502 protein BTH_II0990 (Burkholderia thailandensis (strain ATCC 700388 / DSM 13276 / CCUG 48851 / CIP 106301 / E264)).